The sequence spans 171 residues: Translationally-controlled tumor protein homolog (171 aa).

The region spanning 1-171 (MIIYKDIITG…FKDGLEIEKC (171 aa)) is the TCTP domain.

It belongs to the TCTP family.

Its subcellular location is the cytoplasm. Functionally, involved in calcium binding and microtubule stabilization. This is Translationally-controlled tumor protein homolog (tpt1) from Danio rerio (Zebrafish).